The following is a 391-amino-acid chain: 8-amino-7-oxononanoate synthase (391 aa).

Residue R19 coordinates substrate. 106–107 contributes to the pyridoxal 5'-phosphate binding site; sequence GY. H131 contributes to the substrate binding site. Positions 178, 206, and 234 each coordinate pyridoxal 5'-phosphate. At K237 the chain carries N6-(pyridoxal phosphate)lysine. T353 lines the substrate pocket.

This sequence belongs to the class-II pyridoxal-phosphate-dependent aminotransferase family. BioF subfamily. In terms of assembly, homodimer. It depends on pyridoxal 5'-phosphate as a cofactor.

The catalysed reaction is 6-carboxyhexanoyl-[ACP] + L-alanine + H(+) = (8S)-8-amino-7-oxononanoate + holo-[ACP] + CO2. Its pathway is cofactor biosynthesis; biotin biosynthesis. In terms of biological role, catalyzes the decarboxylative condensation of pimeloyl-[acyl-carrier protein] and L-alanine to produce 8-amino-7-oxononanoate (AON), [acyl-carrier protein], and carbon dioxide. This is 8-amino-7-oxononanoate synthase from Pelobacter propionicus (strain DSM 2379 / NBRC 103807 / OttBd1).